The primary structure comprises 284 residues: 2-dehydro-3-deoxyphosphooctonate aldolase (284 aa).

It belongs to the KdsA family.

The protein localises to the cytoplasm. The enzyme catalyses D-arabinose 5-phosphate + phosphoenolpyruvate + H2O = 3-deoxy-alpha-D-manno-2-octulosonate-8-phosphate + phosphate. It functions in the pathway carbohydrate biosynthesis; 3-deoxy-D-manno-octulosonate biosynthesis; 3-deoxy-D-manno-octulosonate from D-ribulose 5-phosphate: step 2/3. Its pathway is bacterial outer membrane biogenesis; lipopolysaccharide biosynthesis. The polypeptide is 2-dehydro-3-deoxyphosphooctonate aldolase (Escherichia coli O6:H1 (strain CFT073 / ATCC 700928 / UPEC)).